A 309-amino-acid polypeptide reads, in one-letter code: Non-homologous end-joining factor 1 (309 aa).

The segment at 1-134 (MEAVLSALPW…TPVAVVCRQL (134 aa)) is globular head. The C-terminal tail stretch occupies residues 223-298 (GKTGRKRKHS…AGSEDRSTSR (76 aa)). The tract at residues 223–309 (GKTGRKRKHS…KKKKAVGLFR (87 aa)) is disordered. A compositionally biased stretch (basic and acidic residues) spans 243 to 252 (HITDHQHISE). 2 stretches are compositionally biased toward polar residues: residues 253–265 (STDV…SQEH) and 273–290 (RSQV…STAG). Positions 297-309 (SRAKKKKAVGLFR) are enriched in basic residues. An XLM motif is present at residues 299-309 (AKKKKAVGLFR).

Belongs to the XRCC4-XLF family. XLF subfamily. As to quaternary structure, homodimer. Interacts with xrcc4; the interaction is direct and is mediated via a head-to-head interaction between N-terminal head regions. Component of the core long-range non-homologous end joining (NHEJ) complex (also named DNA-PK complex) composed of prkdc/DNA-PKcs, lig4, xrcc4, xrcc6/Ku70, xrcc5/Ku80 and nhej1/xlf.

It localises to the nucleus. It is found in the chromosome. In terms of biological role, DNA repair protein involved in DNA non-homologous end joining (NHEJ); it is required for double-strand break (DSB) repair and V(D)J recombination and is also involved in telomere maintenance. Plays a key role in NHEJ by promoting the ligation of various mismatched and non-cohesive ends. In some studies, has been shown to associate with xrcc4 to form alternating helical filaments that bridge DNA and act like a bandage, holding together the broken DNA until it is repaired. Alternatively, it has also been shown that rather than forming filaments, a single nhej1 dimer interacts through both head domains with xrcc4 to promote the close alignment of DNA ends. The xrcc4-nhej1/xlf subcomplex binds to the DNA fragments of a DSB in a highly diffusive manner and robustly bridges two independent DNA molecules, holding the broken DNA fragments in close proximity to one other. The mobility of the bridges ensures that the ends remain accessible for further processing by other repair factors. The chain is Non-homologous end-joining factor 1 (nhej1) from Danio rerio (Zebrafish).